A 140-amino-acid polypeptide reads, in one-letter code: Nucleoside diphosphate kinase (140 aa).

Positions 11, 59, 87, 93, 104, and 114 each coordinate ATP. The active-site Pros-phosphohistidine intermediate is the His117.

This sequence belongs to the NDK family. As to quaternary structure, homotetramer. It depends on Mg(2+) as a cofactor.

The protein localises to the cytoplasm. The catalysed reaction is a 2'-deoxyribonucleoside 5'-diphosphate + ATP = a 2'-deoxyribonucleoside 5'-triphosphate + ADP. The enzyme catalyses a ribonucleoside 5'-diphosphate + ATP = a ribonucleoside 5'-triphosphate + ADP. Major role in the synthesis of nucleoside triphosphates other than ATP. The ATP gamma phosphate is transferred to the NDP beta phosphate via a ping-pong mechanism, using a phosphorylated active-site intermediate. This chain is Nucleoside diphosphate kinase, found in Francisella tularensis subsp. holarctica (strain LVS).